The sequence spans 137 residues: Putative pre-16S rRNA nuclease (137 aa).

The protein belongs to the YqgF nuclease family.

It is found in the cytoplasm. Functionally, could be a nuclease involved in processing of the 5'-end of pre-16S rRNA. This Mycoplasmopsis synoviae (strain 53) (Mycoplasma synoviae) protein is Putative pre-16S rRNA nuclease.